The primary structure comprises 613 residues: Dihydroxy-acid dehydratase (613 aa).

A Mg(2+)-binding site is contributed by Asp81. Residue Cys122 participates in [2Fe-2S] cluster binding. Mg(2+) is bound by residues Asp123 and Lys124. At Lys124 the chain carries N6-carboxylysine. Cys195 contributes to the [2Fe-2S] cluster binding site. A Mg(2+)-binding site is contributed by Glu491. Residue Ser517 is the Proton acceptor of the active site.

The protein belongs to the IlvD/Edd family. In terms of assembly, homodimer. It depends on [2Fe-2S] cluster as a cofactor. Mg(2+) is required as a cofactor.

The enzyme catalyses (2R)-2,3-dihydroxy-3-methylbutanoate = 3-methyl-2-oxobutanoate + H2O. It catalyses the reaction (2R,3R)-2,3-dihydroxy-3-methylpentanoate = (S)-3-methyl-2-oxopentanoate + H2O. The protein operates within amino-acid biosynthesis; L-isoleucine biosynthesis; L-isoleucine from 2-oxobutanoate: step 3/4. It participates in amino-acid biosynthesis; L-valine biosynthesis; L-valine from pyruvate: step 3/4. Functionally, functions in the biosynthesis of branched-chain amino acids. Catalyzes the dehydration of (2R,3R)-2,3-dihydroxy-3-methylpentanoate (2,3-dihydroxy-3-methylvalerate) into 2-oxo-3-methylpentanoate (2-oxo-3-methylvalerate) and of (2R)-2,3-dihydroxy-3-methylbutanoate (2,3-dihydroxyisovalerate) into 2-oxo-3-methylbutanoate (2-oxoisovalerate), the penultimate precursor to L-isoleucine and L-valine, respectively. This chain is Dihydroxy-acid dehydratase, found in Vibrio vulnificus (strain YJ016).